A 276-amino-acid polypeptide reads, in one-letter code: Exosome complex component RRP43 (276 aa).

N-acetylalanine is present on A2.

This sequence belongs to the RNase PH family. As to quaternary structure, component of the RNA exosome core complex (Exo-9), composed of EXOSC1, EXOSC2, EXOSC3, EXOSC4, EXOSC5, EXOSC6, EXOSC7, EXOSC8 and EXOSC9; within the complex interacts with EXOSC5 and EXOSC6. The catalytically inactive RNA exosome core complex (Exo-9) associates with the catalytic subunit EXOSC10/RRP6. Exo-9 may associate with DIS3 to form the nucleolar exosome complex, or DIS3L to form the cytoplasmic exosome complex. Exo-9 is formed by a hexameric base ring consisting of the heterodimers EXOSC4-EXOSC9, EXOSC5-EXOSC8 and EXOSC6-EXOSC7, and a cap ring consisting of EXOSC1, EXOSC2 and EXOSC3. The RNA exosome complex associates with cofactors C1D/RRP47, MPHOSPH6/MPP6 and MTREX/MTR4. Binds outer membrane protein opap from Neisseria gonorrhoeae.

The protein localises to the cytoplasm. It is found in the nucleus. Its subcellular location is the nucleolus. Its function is as follows. Non-catalytic component of the RNA exosome complex which has 3'-&gt;5' exoribonuclease activity and participates in a multitude of cellular RNA processing and degradation events. In the nucleus, the RNA exosome complex is involved in proper maturation of stable RNA species such as rRNA, snRNA and snoRNA, in the elimination of RNA processing by-products and non-coding 'pervasive' transcripts, such as antisense RNA species and promoter-upstream transcripts (PROMPTs), and of mRNAs with processing defects, thereby limiting or excluding their export to the cytoplasm. The RNA exosome may be involved in Ig class switch recombination (CSR) and/or Ig variable region somatic hypermutation (SHM) by targeting AICDA deamination activity to transcribed dsDNA substrates. In the cytoplasm, the RNA exosome complex is involved in general mRNA turnover and specifically degrades inherently unstable mRNAs containing AU-rich elements (AREs) within their 3' untranslated regions, and in RNA surveillance pathways, preventing translation of aberrant mRNAs. It seems to be involved in degradation of histone mRNA. The catalytic inactive RNA exosome core complex of 9 subunits (Exo-9) is proposed to play a pivotal role in the binding and presentation of RNA for ribonucleolysis, and to serve as a scaffold for the association with catalytic subunits and accessory proteins or complexes. EXOSC8 binds to ARE-containing RNAs. The protein is Exosome complex component RRP43 (EXOSC8) of Homo sapiens (Human).